A 590-amino-acid polypeptide reads, in one-letter code: Aspartate--tRNA(Asp/Asn) ligase (590 aa).

Glu-170 provides a ligand contact to L-aspartate. The interval 194-197 (QLFK) is aspartate. L-aspartate is bound at residue Arg-216. Residues 216–218 (RDE) and Gln-225 each bind ATP. Residue His-448 coordinates L-aspartate. Glu-482 contributes to the ATP binding site. Arg-489 is a binding site for L-aspartate. 534–537 (GWDR) contributes to the ATP binding site. A disordered region spans residues 557–590 (SGGGADPLTGAPAPITPQQRRESGIDAKPKKDGE). A compositionally biased stretch (basic and acidic residues) spans 575-590 (QRRESGIDAKPKKDGE).

It belongs to the class-II aminoacyl-tRNA synthetase family. Type 1 subfamily. In terms of assembly, homodimer.

It is found in the cytoplasm. The catalysed reaction is tRNA(Asx) + L-aspartate + ATP = L-aspartyl-tRNA(Asx) + AMP + diphosphate. In terms of biological role, aspartyl-tRNA synthetase with relaxed tRNA specificity since it is able to aspartylate not only its cognate tRNA(Asp) but also tRNA(Asn). Reaction proceeds in two steps: L-aspartate is first activated by ATP to form Asp-AMP and then transferred to the acceptor end of tRNA(Asp/Asn). In Mycobacterium sp. (strain JLS), this protein is Aspartate--tRNA(Asp/Asn) ligase.